The primary structure comprises 503 residues: Maturase K (503 aa).

Belongs to the intron maturase 2 family. MatK subfamily.

The protein localises to the plastid. It is found in the chloroplast. Functionally, usually encoded in the trnK tRNA gene intron. Probably assists in splicing its own and other chloroplast group II introns. This is Maturase K from Panax ginseng (Korean ginseng).